We begin with the raw amino-acid sequence, 488 residues long: Zinc metalloproteinase-disintegrin 8 (488 aa).

Residues 1 to 20 form the signal peptide; it reads MIQVLLVTICLAVFPYQGSS. Residues 21 to 191 constitute a propeptide that is removed on maturation; sequence IILESGNVND…KASQLNLPPE (171 aa). Residues 198 to 396 form the Peptidase M12B domain; the sequence is TYIELVVVAD…STTRCLHNEP (199 aa). Residues Glu-201 and Asp-285 each coordinate Ca(2+). N-linked (GlcNAc...) asparagine glycosylation occurs at Asn-296. 3 cysteine pairs are disulfide-bonded: Cys-309–Cys-391, Cys-349–Cys-373, and Cys-351–Cys-356. His-334 is a binding site for Zn(2+). The active site involves Glu-335. The Zn(2+) site is built by His-338 and His-344. Ca(2+) is bound by residues Cys-391, Asn-394, Asn-409, Glu-413, Glu-416, and Asp-419. The region spanning 404-488 is the Disintegrin domain; sequence PPFCGNYFKE…ADCPRNGLYG (85 aa). Disulfide bonds link Cys-407-Cys-426, Cys-418-Cys-436, Cys-420-Cys-431, Cys-430-Cys-453, Cys-444-Cys-450, Cys-449-Cys-474, and Cys-462-Cys-481. Positions 466 to 468 match the Cell attachment site motif; the sequence is RGD.

The protein belongs to the venom metalloproteinase (M12B) family. P-II subfamily. Zn(2+) is required as a cofactor. In terms of tissue distribution, expressed by the venom gland.

It localises to the secreted. In terms of biological role, inhibits ADP-induced platelet aggregation (probably by binding integrin alpha-IIb/beta-3 (ITGA2B/ITGB3)) and degrades fibrinogen. In Crotalus adamanteus (Eastern diamondback rattlesnake), this protein is Zinc metalloproteinase-disintegrin 8.